The primary structure comprises 340 residues: DNA repair protein RAD51 homolog B (340 aa).

A disordered region spans residues 1–22 (MSSSSAHQKASPPIEEEATEHG). The HhH domain maps to 49 to 78 (TVESVAYSPRKDLLQIKGISEAKVDKIIEA). Residue 128-135 (GEFRSGKT) coordinates ATP.

The protein belongs to the RecA family. RAD51 subfamily. As to quaternary structure, self-associates and may interact with XRCC3 homolog. In terms of tissue distribution, highly expressed in mitotic and meiotic tissues, but low levels in differentiated tissues.

The protein resides in the nucleus. Functionally, binds to single and double-stranded DNA and exhibits DNA-dependent ATPase activity. Unwinds duplex DNA. Component of the meiotic recombination pathway. Seems to play a role in mediating chromosome homology search, chromosome pairing and synapsis at early stages and probably chromosome crossing-over at later stages in meiosis. Probably is involved in the repair of meiotic double strand breaks (DBSs) and in homologous recombination. The sequence is that of DNA repair protein RAD51 homolog B (RAD51B) from Zea mays (Maize).